A 274-amino-acid polypeptide reads, in one-letter code: DNA damage-inducible protein D (274 aa).

This is DNA damage-inducible protein D (dinD) from Escherichia coli (strain K12).